Reading from the N-terminus, the 161-residue chain is Type IV major fimbrial protein FimA (161 aa).

A propeptide spans 1–7 (leader sequence); it reads MKSLQKG. Phenylalanine 8 carries the post-translational modification N-methylphenylalanine. The chain crosses the membrane as a helical span at residues 8–28; it reads FTLIELMIVVAIIGILAAFAI. Cysteine 63 and cysteine 105 are disulfide-bonded.

Belongs to the N-Me-Phe pilin family. In terms of assembly, the pili are polar flexible filaments of about 5.4 nanometers diameter and 2.5 micrometers average length; they consist of only a single polypeptide chain arranged in a helical configuration of five subunits per turn in the assembled pilus.

Its subcellular location is the fimbrium. The protein localises to the membrane. Major component of the type IV fimbriae that plays an essential role in twitching motility, natural transformation, and protease secretion. The polypeptide is Type IV major fimbrial protein FimA (fimA) (Dichelobacter nodosus (Bacteroides nodosus)).